An 800-amino-acid chain; its full sequence is Ent-copalyl diphosphate synthase 2 (800 aa).

The disordered stretch occupies residues Q52–A80. A compositionally biased stretch (basic and acidic residues) spans E55 to R69. K242 is a substrate binding site. Mg(2+) is bound by residues D374 and D376. The short motif at D374–D377 is the DXDD motif element. Residue K461 coordinates substrate.

The protein belongs to the terpene synthase family. It depends on Mg(2+) as a cofactor.

The catalysed reaction is (2E,6E,10E)-geranylgeranyl diphosphate = ent-copalyl diphosphate. Catalyzes the conversion of geranylgeranyl diphosphate to the phytoalexin precursor ent-copalyl diphosphate. This chain is Ent-copalyl diphosphate synthase 2 (CPS2), found in Oryza sativa subsp. indica (Rice).